The sequence spans 244 residues: Claudin-12 (244 aa).

Residues 1 to 10 (MGCRDVHAAT) are Cytoplasmic-facing. Residues 11 to 31 (VLSFLCGIASVAGLFAGTLLP) form a helical membrane-spanning segment. Topologically, residues 32–87 (NWRKLRLITFNRNEKNLTVYTGLWVKCARYDGSSDCLMYDTTWYSSVDQLDLRVLQ) are extracellular. Residues 88–108 (FALPLSMLIAMGALLLCLIGM) traverse the membrane as a helical segment. Residues 109–135 (CNTAFRSSVPNIKLAKCLVNSAGCHLV) are Cytoplasmic-facing. Residues 136–156 (AGLLFFLAGTVSLSPSIWVIF) form a helical membrane-spanning segment. At 157 to 174 (YNIHLNKKFEPVFSFDYA) the chain is on the extracellular side. A helical transmembrane segment spans residues 175 to 195 (VYVTIASAGGLFMTSLILFIW). Topologically, residues 196-244 (YCTCKSLPSPFWQPLYSHPPSMHTYSQPYSARSRLSAIEIDIPVVSHTT) are cytoplasmic. 2 positions are modified to phosphoserine: serine 228 and serine 231.

This sequence belongs to the claudin family. In terms of assembly, interacts with OCLN.

It localises to the cell junction. It is found in the tight junction. The protein localises to the cell membrane. Plays a major role in tight junction-specific obliteration of the intercellular space, through calcium-independent cell-adhesion activity. This Pongo abelii (Sumatran orangutan) protein is Claudin-12 (CLDN12).